A 789-amino-acid chain; its full sequence is Kin of IRRE-like protein 1 (789 aa).

An N-terminal signal peptide occupies residues M1 to A47. 3 N-linked (GlcNAc...) asparagine glycosylation sites follow: N5, N78, and N172. Topologically, residues L48–A531 are extracellular. 5 consecutive Ig-like C2-type domains span residues P49–T147, P152–E248, P255–N335, P340–L419, and P424–E520. C74 and C132 are joined by a disulfide. 2 disulfides stabilise this stretch: C175–C232 and C276–C319. N329 carries an N-linked (GlcNAc...) asparagine glycan. C361 and C403 are joined by a disulfide. A Cell attachment site motif is present at residues R437–D439. Cysteines 445 and 504 form a disulfide. N503 carries an N-linked (GlcNAc...) asparagine glycan. The helical transmembrane segment at G532–L552 threads the bilayer. Residues Y553–V789 are Cytoplasmic-facing. The residue at position 606 (S606) is a Phosphoserine. Phosphotyrosine; by FYN is present on residues Y637 and Y638. Residues Y654 and Y657 each carry the phosphotyrosine modification. The disordered stretch occupies residues R687–Q713. The span at G694–S712 shows a compositional bias: low complexity. A Phosphotyrosine modification is found at Y756.

This sequence belongs to the immunoglobulin superfamily. In terms of assembly, interacts with TJP1/ZO-1 and with NPHS2/podocin (via the C-terminus). Interacts with NPHS1/nephrin (via the Ig-like domains); this interaction is dependent on KIRREL1 glycosylation. Homodimer (via the Ig-like domains). Interacts when tyrosine-phosphorylated with GRB2. Phosphorylation probably regulates the interaction with NPHS2. Phosphorylated at Tyr-637 and Tyr-638 by FYN, leading to GRB2 binding. Post-translationally, N-glycosylated.

It localises to the cell membrane. Required for proper function of the glomerular filtration barrier. It is involved in the maintenance of a stable podocyte architecture with interdigitating foot processes connected by specialized cell-cell junctions, known as the slit diaphragm. It is a signaling protein that needs the presence of TEC kinases to fully trans-activate the transcription factor AP-1. The polypeptide is Kin of IRRE-like protein 1 (Kirrel1) (Rattus norvegicus (Rat)).